The following is a 166-amino-acid chain: uncharacterized protein (166 aa).

Functionally, this protein may be involved in virus assembly. Essential for virus function. This is an uncharacterized protein from Sulfolobus spindle-shape virus 1 (SSV1).